A 351-amino-acid polypeptide reads, in one-letter code: MQIASSPFTHNQRSTRSIMLLVILACIPGIIAQTYFFGYGSLIQVALAIMTAVLAEGAVLHLRKQPVLTRLQDNSALLTGLLLGISLPPLAPWWMIVLGTAFAIIIAKQLYGGLGQNPFNPAMVGYVVLLISFPVQMTSWLPPLPLQGTPVGFYDSLLTIFTGFTQNGADIHQLQIGYDGISQATPLDNFKTSLRSQPVEQILQQPIFTAGLAGIGWQWINLGFLAGGLLLLWRKAIHWHIPVSFLLALAGCAAISWMIAPHSFAPPMLHLFSGATMLGAFFIATDPVSASTTPRGRLIFGALIGILVWLIRVYGGYPDGVAFAVLLANICVPLIDHYTQPRVYGHQRGHK.

4 consecutive transmembrane segments (helical) span residues 18-38 (IMLL…YFFG), 42-62 (LIQV…VLHL), 87-107 (LPPL…IIIA), and 121-141 (PAMV…TSWL). Threonine 185 is subject to FMN phosphoryl threonine. The next 5 membrane-spanning stretches (helical) occupy residues 212 to 232 (LAGI…LLLL), 241 to 261 (IPVS…MIAP), 264 to 284 (FAPP…FFIA), 298 to 318 (LIFG…GGYP), and 320 to 340 (GVAF…HYTQ).

This sequence belongs to the NqrB/RnfD family. In terms of assembly, the complex is composed of six subunits: RnfA, RnfB, RnfC, RnfD, RnfE and RnfG. It depends on FMN as a cofactor.

The protein resides in the cell inner membrane. Functionally, part of a membrane-bound complex that couples electron transfer with translocation of ions across the membrane. In Yersinia enterocolitica serotype O:8 / biotype 1B (strain NCTC 13174 / 8081), this protein is Ion-translocating oxidoreductase complex subunit D.